The sequence spans 374 residues: Arrestin domain-containing protein 15 (374 aa).

The disordered stretch occupies residues 344–374 (HHLNRSKAKVSKTEQQQRKTRNIVEENPYFR).

The protein belongs to the arrestin family.

The chain is Arrestin domain-containing protein 15 (arrd-15) from Caenorhabditis elegans.